A 217-amino-acid polypeptide reads, in one-letter code: Probable transaldolase (217 aa).

The active-site Schiff-base intermediate with substrate is Lys83.

This sequence belongs to the transaldolase family. Type 3B subfamily.

Its subcellular location is the cytoplasm. It carries out the reaction D-sedoheptulose 7-phosphate + D-glyceraldehyde 3-phosphate = D-erythrose 4-phosphate + beta-D-fructose 6-phosphate. The protein operates within carbohydrate degradation; pentose phosphate pathway; D-glyceraldehyde 3-phosphate and beta-D-fructose 6-phosphate from D-ribose 5-phosphate and D-xylulose 5-phosphate (non-oxidative stage): step 2/3. In terms of biological role, transaldolase is important for the balance of metabolites in the pentose-phosphate pathway. The sequence is that of Probable transaldolase from Hydrogenobaculum sp. (strain Y04AAS1).